Here is a 160-residue protein sequence, read N- to C-terminus: Troponin C, isoform 2 (160 aa).

4 consecutive EF-hand domains span residues 15-50, 51-86, 92-127, and 128-160; these read DQIE…MGQA, FEER…FVVN, GLEE…LDDN, and VSEE…MSGE. D64, D66, S68, E70, and E75 together coordinate Ca(2+). The Ca(2+) site is built by D141, D143, S145, T147, and E152.

It belongs to the troponin C family. In terms of tissue distribution, pharyngeal muscle.

The chain is Troponin C, isoform 2 (tnc-2) from Caenorhabditis elegans.